The sequence spans 164 residues: R-phycoerythrin alpha chain (164 aa).

(2R,3E)-phycoerythrobilin contacts are provided by N47, K81, C82, R84, H88, R137, C139, and R142.

Belongs to the phycobiliprotein family. As to quaternary structure, heterododecamer of 6 alpha and 6 beta chains. The basic functional unit of phycobiliproteins is a ring-shaped hexamer formed from two back-to-back trimers contacting via the alpha chain subunits. The trimers are composed of alpha/beta subunit heterodimers arranged around a three-fold axis of symmetry. The phycoerythrins also contain a gamma subunit which is located in the center of the hexamer. Contains two covalently linked phycoerythrobilin chromophores.

The protein resides in the plastid. Its subcellular location is the chloroplast thylakoid membrane. In terms of biological role, light-harvesting photosynthetic tetrapyrrole chromophore-protein from the phycobiliprotein complex. The polypeptide is R-phycoerythrin alpha chain (cpeA) (Griffithsia monilis (Red alga)).